The chain runs to 450 residues: Tubulin alpha-1 chain (450 aa).

GTP-binding residues include glutamine 11, glutamate 71, glycine 144, threonine 145, threonine 179, asparagine 206, and asparagine 228. Glutamate 71 contacts Mg(2+). Glutamate 254 is a catalytic residue.

This sequence belongs to the tubulin family. Dimer of alpha and beta chains. A typical microtubule is a hollow water-filled tube with an outer diameter of 25 nm and an inner diameter of 15 nM. Alpha-beta heterodimers associate head-to-tail to form protofilaments running lengthwise along the microtubule wall with the beta-tubulin subunit facing the microtubule plus end conferring a structural polarity. Microtubules usually have 13 protofilaments but different protofilament numbers can be found in some organisms and specialized cells. The cofactor is Mg(2+). Undergoes a tyrosination/detyrosination cycle, the cyclic removal and re-addition of a C-terminal tyrosine residue by the enzymes tubulin tyrosine carboxypeptidase (TTCP) and tubulin tyrosine ligase (TTL), respectively.

The protein localises to the cytoplasm. It is found in the cytoskeleton. It carries out the reaction GTP + H2O = GDP + phosphate + H(+). In terms of biological role, tubulin is the major constituent of microtubules, a cylinder consisting of laterally associated linear protofilaments composed of alpha- and beta-tubulin heterodimers. Microtubules grow by the addition of GTP-tubulin dimers to the microtubule end, where a stabilizing cap forms. Below the cap, tubulin dimers are in GDP-bound state, owing to GTPase activity of alpha-tubulin. In Oryza sativa subsp. japonica (Rice), this protein is Tubulin alpha-1 chain (TUBA1).